The chain runs to 175 residues: Crossover junction endodeoxyribonuclease RuvC (175 aa).

Active-site residues include aspartate 11, glutamate 71, and histidine 143. Residues aspartate 11, glutamate 71, and histidine 143 each coordinate Mg(2+).

This sequence belongs to the RuvC family. As to quaternary structure, homodimer which binds Holliday junction (HJ) DNA. The HJ becomes 2-fold symmetrical on binding to RuvC with unstacked arms; it has a different conformation from HJ DNA in complex with RuvA. In the full resolvosome a probable DNA-RuvA(4)-RuvB(12)-RuvC(2) complex forms which resolves the HJ. It depends on Mg(2+) as a cofactor.

It is found in the cytoplasm. The enzyme catalyses Endonucleolytic cleavage at a junction such as a reciprocal single-stranded crossover between two homologous DNA duplexes (Holliday junction).. In terms of biological role, the RuvA-RuvB-RuvC complex processes Holliday junction (HJ) DNA during genetic recombination and DNA repair. Endonuclease that resolves HJ intermediates. Cleaves cruciform DNA by making single-stranded nicks across the HJ at symmetrical positions within the homologous arms, yielding a 5'-phosphate and a 3'-hydroxyl group; requires a central core of homology in the junction. The consensus cleavage sequence is 5'-(A/T)TT(C/G)-3'. Cleavage occurs on the 3'-side of the TT dinucleotide at the point of strand exchange. HJ branch migration catalyzed by RuvA-RuvB allows RuvC to scan DNA until it finds its consensus sequence, where it cleaves and resolves the cruciform DNA. The sequence is that of Crossover junction endodeoxyribonuclease RuvC from Parvibaculum lavamentivorans (strain DS-1 / DSM 13023 / NCIMB 13966).